The primary structure comprises 180 residues: ATP-dependent protease subunit HslV (180 aa).

Threonine 7 is a catalytic residue. Na(+) is bound by residues alanine 165, cysteine 168, and threonine 171.

Belongs to the peptidase T1B family. HslV subfamily. A double ring-shaped homohexamer of HslV is capped on each side by a ring-shaped HslU homohexamer. The assembly of the HslU/HslV complex is dependent on binding of ATP.

The protein resides in the cytoplasm. The enzyme catalyses ATP-dependent cleavage of peptide bonds with broad specificity.. Its activity is regulated as follows. Allosterically activated by HslU binding. Functionally, protease subunit of a proteasome-like degradation complex believed to be a general protein degrading machinery. This Geobacillus kaustophilus (strain HTA426) protein is ATP-dependent protease subunit HslV.